A 217-amino-acid polypeptide reads, in one-letter code: Peptide deformylase 1 (217 aa).

Fe cation is bound by residues cysteine 129 and histidine 171. Glutamate 172 is an active-site residue. Histidine 175 is a Fe cation binding site.

Belongs to the polypeptide deformylase family. It depends on Fe(2+) as a cofactor.

The enzyme catalyses N-terminal N-formyl-L-methionyl-[peptide] + H2O = N-terminal L-methionyl-[peptide] + formate. In terms of biological role, removes the formyl group from the N-terminal Met of newly synthesized proteins. Requires at least a dipeptide for an efficient rate of reaction. N-terminal L-methionine is a prerequisite for activity but the enzyme has broad specificity at other positions. In Bifidobacterium longum (strain NCC 2705), this protein is Peptide deformylase 1.